A 78-amino-acid polypeptide reads, in one-letter code: D-alanyl carrier protein (78 aa).

The Carrier domain maps to 1–78 (MEFREQVLDL…KIVEVLEELR (78 aa)). An O-(pantetheine 4'-phosphoryl)serine modification is found at S36.

It belongs to the DltC family. 4'-phosphopantetheine is transferred from CoA to a specific serine of apo-DCP.

The protein resides in the cytoplasm. It participates in cell wall biogenesis; lipoteichoic acid biosynthesis. Its function is as follows. Carrier protein involved in the D-alanylation of lipoteichoic acid (LTA). The loading of thioester-linked D-alanine onto DltC is catalyzed by D-alanine--D-alanyl carrier protein ligase DltA. The DltC-carried D-alanyl group is further transferred to cell membrane phosphatidylglycerol (PG) by forming an ester bond, probably catalyzed by DltD. D-alanylation of LTA plays an important role in modulating the properties of the cell wall in Gram-positive bacteria, influencing the net charge of the cell wall. The polypeptide is D-alanyl carrier protein (Staphylococcus xylosus).